The sequence spans 577 residues: Mitochondrial-processing peptidase subunit alpha (577 aa).

The N-terminal 35 residues, 1–35, are a transit peptide targeting the mitochondrion; sequence MLNRFRPARLVAQSSRCLPLTRARAGPLPVNNART. The tract at residues 259–301 is disordered; it reads SDAPGLSRTGSETSVDSLVSESSEASSESSSSSSDSSESSGGL. Residues 269–301 show a composition bias toward low complexity; it reads SETSVDSLVSESSEASSESSSSSSDSSESSGGL.

This sequence belongs to the peptidase M16 family. As to quaternary structure, heterodimer of mpp (alpha) and pep (beta) subunits, forming the mitochondrial processing protease (MPP) in which mpp is involved in substrate recognition and binding and pep is the catalytic subunit.

Its subcellular location is the mitochondrion matrix. Its function is as follows. Substrate recognition and binding subunit of the essential mitochondrial processing protease (MPP), which cleaves the mitochondrial sequence off newly imported precursors proteins. This is Mitochondrial-processing peptidase subunit alpha from Neurospora crassa (strain ATCC 24698 / 74-OR23-1A / CBS 708.71 / DSM 1257 / FGSC 987).